Reading from the N-terminus, the 325-residue chain is Beta-ketoacyl-[acyl-carrier-protein] synthase III 2 (325 aa).

Catalysis depends on residues Cys113 and His250. The tract at residues 251 to 255 is ACP-binding; that stretch reads SANLR. Asn280 is a catalytic residue.

Belongs to the thiolase-like superfamily. FabH family. In terms of assembly, homodimer.

It is found in the cytoplasm. It carries out the reaction 3-methylbutanoyl-CoA + malonyl-[ACP] + H(+) = 5-methyl-3-oxohexanoyl-[ACP] + CO2 + CoA. The enzyme catalyses 2-methylpropanoyl-CoA + malonyl-[ACP] + H(+) = 4-methyl-3-oxopentanoyl-[ACP] + CO2 + CoA. The catalysed reaction is (2S)-2-methylbutanoyl-CoA + malonyl-[ACP] + H(+) = (4S)-4-methyl-3-oxohexanoyl-[ACP] + CO2 + CoA. It catalyses the reaction malonyl-[ACP] + acetyl-CoA + H(+) = 3-oxobutanoyl-[ACP] + CO2 + CoA. It carries out the reaction malonyl-[ACP] + propanoyl-CoA + H(+) = 3-oxopentanoyl-[ACP] + CO2 + CoA. The enzyme catalyses butanoyl-CoA + malonyl-[ACP] + H(+) = 3-oxohexanoyl-[ACP] + CO2 + CoA. The catalysed reaction is pentanoyl-CoA + malonyl-[ACP] + H(+) = 3-oxoheptanoyl-[ACP] + CO2 + CoA. It catalyses the reaction hexanoyl-CoA + malonyl-[ACP] + H(+) = 3-oxooctanoyl-[ACP] + CO2 + CoA. It carries out the reaction heptanoyl-CoA + malonyl-[ACP] + H(+) = 3-oxononanoyl-[ACP] + CO2 + CoA. It functions in the pathway lipid metabolism; fatty acid biosynthesis. Functionally, catalyzes the condensation reaction of fatty acid synthesis by the addition to an acyl acceptor of two carbons from malonyl-ACP. Catalyzes the first condensation reaction which initiates fatty acid synthesis and may therefore play a role in governing the total rate of fatty acid production. Possesses both acetoacetyl-ACP synthase and acetyl transacylase activities. Has some substrate specificity for branched chain acyl-CoA, determining the biosynthesis of branched-chain of fatty acids instead of straight-chain. The protein is Beta-ketoacyl-[acyl-carrier-protein] synthase III 2 of Bacillus subtilis (strain 168).